A 281-amino-acid polypeptide reads, in one-letter code: ATP phosphoribosyltransferase (281 aa).

Belongs to the ATP phosphoribosyltransferase family. Long subfamily. Mg(2+) is required as a cofactor.

It is found in the cytoplasm. The catalysed reaction is 1-(5-phospho-beta-D-ribosyl)-ATP + diphosphate = 5-phospho-alpha-D-ribose 1-diphosphate + ATP. The protein operates within amino-acid biosynthesis; L-histidine biosynthesis; L-histidine from 5-phospho-alpha-D-ribose 1-diphosphate: step 1/9. Feedback inhibited by histidine. Functionally, catalyzes the condensation of ATP and 5-phosphoribose 1-diphosphate to form N'-(5'-phosphoribosyl)-ATP (PR-ATP). Has a crucial role in the pathway because the rate of histidine biosynthesis seems to be controlled primarily by regulation of HisG enzymatic activity. The sequence is that of ATP phosphoribosyltransferase from Corynebacterium diphtheriae (strain ATCC 700971 / NCTC 13129 / Biotype gravis).